Here is a 105-residue protein sequence, read N- to C-terminus: Large ribosomal subunit protein bL21 (105 aa).

This sequence belongs to the bacterial ribosomal protein bL21 family. Part of the 50S ribosomal subunit. Contacts protein L20.

Its function is as follows. This protein binds to 23S rRNA in the presence of protein L20. The protein is Large ribosomal subunit protein bL21 of Dictyoglomus turgidum (strain DSM 6724 / Z-1310).